The following is a 118-amino-acid chain: RNA guanine-N7 methyltransferase activating subunit (118 aa).

Threonine 2 is subject to N-acetylthreonine. The interaction with RNMT stretch occupies residues 2–55 (TDTAEAVPNFEEMFASRFTENDKEYQEYLKRPPESPPIVEEWNSRAGGNQRNRG). A disordered region spans residues 30 to 118 (LKRPPESPPI…YNQRPPYGYY (89 aa)). At serine 36 the chain carries Phosphoserine. The RNMT-activating domain motif lies at 36–42 (SPPIVEE). Residues 45–56 (SRAGGNQRNRGN) show a composition bias toward low complexity. The interval 56–118 (NRLQDNRQFR…YNQRPPYGYY (63 aa)) is RNA-binding. Positions 57–70 (RLQDNRQFRGRDNR) are enriched in basic and acidic residues. Positions 76 to 93 (DNRSNQWHGRSWGNNYPQ) are enriched in polar residues. An Omega-N-methylarginine modification is found at arginine 85. Serine 86 carries the phosphoserine modification. The segment covering 98 to 109 (PYYPQQYGHYGY) has biased composition (low complexity).

This sequence belongs to the RAM family. Interacts with RNMT; this interaction enhances mRNA binding and cap methyltransferase activity.

Its subcellular location is the nucleus. In terms of biological role, regulatory subunit of the mRNA-capping methyltransferase RNMT:RAMAC complex that methylates the N7 position of the added guanosine to the 5'-cap structure of mRNAs. Promotes the recruitment of the methyl donor, S-adenosyl-L-methionine, to RNMT. Regulates RNMT expression by a post-transcriptional stabilizing mechanism. Binds RNA. The sequence is that of RNA guanine-N7 methyltransferase activating subunit (RAMAC) from Pongo abelii (Sumatran orangutan).